The sequence spans 605 residues: Glycerophosphodiester phosphodiesterase domain-containing protein 5 (605 aa).

The Cytoplasmic segment spans residues 1–42 (MVRHQPLQYYEPQLCLSCLTGIYGCRWKRYQRSHDDTTPWER). Intrachain disulfides connect Cys-15–Cys-18 and Cys-25–Cys-571. Residues 43 to 63 (LWFLLLTFTFGLTLTWLYFWW) traverse the membrane as a helical segment. Topologically, residues 64-89 (EVHNDYDEFNWYLYNRMGYWSDWPVP) are extracellular. A helical membrane pass occupies residues 90 to 110 (ILVTTAAAFAYIAGLLVLALC). Over 111-125 (HIAVGQQMNLHWLHK) the chain is Cytoplasmic. Residues 126–146 (IGLVVILASTVVAMSAVAQLW) traverse the membrane as a helical segment. Residues 147–160 (EDEWEVLLISLQGT) are Extracellular-facing. Residues 161 to 181 (APFLHVGAVAAVTMLSWIVAG) form a helical membrane-spanning segment. The Cytoplasmic segment spans residues 182-192 (QFARAERTSSQ). Residues 193–213 (VTILCTFFTVVFALYLAPLTI) traverse the membrane as a helical segment. Residues 214–496 (SSPCIMEKKD…PLWIMPPDEY (283 aa)) are Extracellular-facing. The GP-PDE domain occupies 228 to 485 (PALIGHRGAP…DNSHALSQVP (258 aa)). 5 N-linked (GlcNAc...) asparagine glycosylation sites follow: Asn-301, Asn-336, Asn-352, Asn-374, and Asn-448. The chain crosses the membrane as a helical span at residues 497-517 (CLMWVTADLVSFTLIVGIFVL). The Cytoplasmic segment spans residues 518-605 (QKWRLGGIRS…TKTLIERSGR (88 aa)). The interval 582–605 (STATPVGPRGGGSHTKTLIERSGR) is disordered.

This sequence belongs to the glycerophosphoryl diester phosphodiesterase family. Interacts with PRDX1; forms a mixed-disulfide with PRDX1, leading to disrupt intramolecular disulfide bond between Cys-25 and Cys-571. Post-translationally, intramolecular disulfide bond between Cys-25 and Cys-571 is reduced by PRDX1.

The protein localises to the endomembrane system. Its subcellular location is the cytoplasm. The protein resides in the perinuclear region. It localises to the cell projection. It is found in the growth cone. The catalysed reaction is a 1,2-diacyl-sn-glycero-3-phospho-(1D-myo-inositol-4,5-bisphosphate) + H2O = 1D-myo-inositol 1,4,5-trisphosphate + a 1,2-diacyl-sn-glycerol + H(+). It catalyses the reaction sn-glycerol 3-phosphocholine + H2O = sn-glycerol 3-phosphate + choline + H(+). Functionally, glycerophosphodiester phosphodiesterase that promotes neurite formation and drives spinal motor neuron differentiation. Mediates the cleavage of glycosylphosphatidylinositol (GPI) anchor of target proteins: removes the GPI-anchor of RECK, leading to release RECK from the plasma membrane. May contribute to the osmotic regulation of cellular glycerophosphocholine. In Homo sapiens (Human), this protein is Glycerophosphodiester phosphodiesterase domain-containing protein 5.